Reading from the N-terminus, the 257-residue chain is tRNA pseudouridine synthase A (257 aa).

The active-site Nucleophile is Asp57. A substrate-binding site is contributed by Tyr115.

The protein belongs to the tRNA pseudouridine synthase TruA family. In terms of assembly, homodimer.

The catalysed reaction is uridine(38/39/40) in tRNA = pseudouridine(38/39/40) in tRNA. Functionally, formation of pseudouridine at positions 38, 39 and 40 in the anticodon stem and loop of transfer RNAs. In Lawsonia intracellularis (strain PHE/MN1-00), this protein is tRNA pseudouridine synthase A.